The primary structure comprises 171 residues: S-ribosylhomocysteine lyase (171 aa).

Residues His54, His58, and Cys128 each contribute to the Fe cation site.

This sequence belongs to the LuxS family. As to quaternary structure, homodimer. Fe cation is required as a cofactor.

The enzyme catalyses S-(5-deoxy-D-ribos-5-yl)-L-homocysteine = (S)-4,5-dihydroxypentane-2,3-dione + L-homocysteine. Involved in the synthesis of autoinducer 2 (AI-2) which is secreted by bacteria and is used to communicate both the cell density and the metabolic potential of the environment. The regulation of gene expression in response to changes in cell density is called quorum sensing. Catalyzes the transformation of S-ribosylhomocysteine (RHC) to homocysteine (HC) and 4,5-dihydroxy-2,3-pentadione (DPD). The protein is S-ribosylhomocysteine lyase of Citrobacter koseri (strain ATCC BAA-895 / CDC 4225-83 / SGSC4696).